The chain runs to 130 residues: Insulin-like growth factor 1 (130 aa).

The first 25 residues, methionine 1–alanine 25, serve as a signal peptide directing secretion. A b region spans residues glycine 26–threonine 54. 3 cysteine pairs are disulfide-bonded: cysteine 31–cysteine 73, cysteine 43–cysteine 86, and cysteine 72–cysteine 77. The segment at glycine 55 to threonine 66 is c. Residues glycine 67–alanine 87 form an a region. The tract at residues proline 88–alanine 95 is d. Residues arginine 96–methionine 130 constitute a propeptide, e peptide. The interval serine 97–methionine 130 is disordered. The span at arginine 102–leucine 115 shows a compositional bias: basic and acidic residues. A compositionally biased stretch (polar residues) spans serine 119–methionine 130.

This sequence belongs to the insulin family. As to quaternary structure, forms a ternary complex with IGFR1 and ITGAV:ITGB3. Forms a ternary complex with IGFR1 and ITGA6:ITGB4. Forms a ternary complex with IGFBP3 and ALS.

It localises to the secreted. Functionally, the insulin-like growth factors, isolated from plasma, are structurally and functionally related to insulin but have a much higher growth-promoting activity. May be a physiological regulator of [1-14C]-2-deoxy-D-glucose (2DG) transport and glycogen synthesis in osteoblasts. Stimulates glucose transport in bone-derived osteoblastic (PyMS) cells and is effective at much lower concentrations than insulin, not only regarding glycogen and DNA synthesis but also with regard to enhancing glucose uptake. May play a role in synapse maturation. Ca(2+)-dependent exocytosis of IGF1 is required for sensory perception of smell in the olfactory bulb. Acts as a ligand for IGF1R. Binds to the alpha subunit of IGF1R, leading to the activation of the intrinsic tyrosine kinase activity which autophosphorylates tyrosine residues in the beta subunit thus initiating a cascade of down-stream signaling events leading to activation of the PI3K-AKT/PKB and the Ras-MAPK pathways. Binds to integrins ITGAV:ITGB3 and ITGA6:ITGB4. Its binding to integrins and subsequent ternary complex formation with integrins and IGFR1 are essential for IGF1 signaling. Induces the phosphorylation and activation of IGFR1, MAPK3/ERK1, MAPK1/ERK2 and AKT1. As part of the MAPK/ERK signaling pathway, acts as a negative regulator of apoptosis in cardiomyocytes via promotion of STUB1/CHIP-mediated ubiquitination and degradation of ICER-type isoforms of CREM. The sequence is that of Insulin-like growth factor 1 from Cavia porcellus (Guinea pig).